We begin with the raw amino-acid sequence, 228 residues long: UPF0758 protein str1465 (228 aa).

The MPN domain occupies 103 to 225; it reads QIMSSQQVAR…YYSFREERED (123 aa). Zn(2+) contacts are provided by His174, His176, and Asp187. A JAMM motif motif is present at residues 174-187; sequence HNHPSGEAYPSRND.

The protein belongs to the UPF0758 family.

This Streptococcus thermophilus (strain CNRZ 1066) protein is UPF0758 protein str1465.